An 887-amino-acid polypeptide reads, in one-letter code: DNA mismatch repair protein MutS (887 aa).

Residue 621 to 628 (GPNMGGKS) coordinates ATP. The interval 828 to 853 (AEPEPNKPAAAAKTKPASPQPDLFAS) is disordered. Positions 834-848 (KPAAAAKTKPASPQP) are enriched in low complexity.

This sequence belongs to the DNA mismatch repair MutS family.

This protein is involved in the repair of mismatches in DNA. It is possible that it carries out the mismatch recognition step. This protein has a weak ATPase activity. The sequence is that of DNA mismatch repair protein MutS from Saccharophagus degradans (strain 2-40 / ATCC 43961 / DSM 17024).